We begin with the raw amino-acid sequence, 1184 residues long: DNA-directed RNA polymerase subunit beta (1184 aa).

A disordered region spans residues aspartate 1160–glutamate 1184.

This sequence belongs to the RNA polymerase beta chain family. As to quaternary structure, the RNAP catalytic core consists of 2 alpha, 1 beta, 1 beta' and 1 omega subunit. When a sigma factor is associated with the core the holoenzyme is formed, which can initiate transcription.

The enzyme catalyses RNA(n) + a ribonucleoside 5'-triphosphate = RNA(n+1) + diphosphate. Functionally, DNA-dependent RNA polymerase catalyzes the transcription of DNA into RNA using the four ribonucleoside triphosphates as substrates. The protein is DNA-directed RNA polymerase subunit beta of Listeria welshimeri serovar 6b (strain ATCC 35897 / DSM 20650 / CCUG 15529 / CIP 8149 / NCTC 11857 / SLCC 5334 / V8).